A 493-amino-acid chain; its full sequence is Probable mannosyl-oligosaccharide alpha-1,2-mannosidase 1B (493 aa).

The N-terminal stretch at 1-18 (MHLPSLSVALALVSSSLA) is a signal peptide. N-linked (GlcNAc...) asparagine glycans are attached at residues Asn-87 and Asn-174. The cysteines at positions 324 and 353 are disulfide-linked. The Proton donor role is filled by Glu-367. Asn-489 carries N-linked (GlcNAc...) asparagine glycosylation.

It belongs to the glycosyl hydrolase 47 family. Monomer. Ca(2+) serves as cofactor. The cofactor is Mg(2+).

The protein resides in the cytoplasmic vesicle lumen. It catalyses the reaction N(4)-(alpha-D-Man-(1-&gt;2)-alpha-D-Man-(1-&gt;2)-alpha-D-Man-(1-&gt;3)-[alpha-D-Man-(1-&gt;2)-alpha-D-Man-(1-&gt;3)-[alpha-D-Man-(1-&gt;2)-alpha-D-Man-(1-&gt;6)]-alpha-D-Man-(1-&gt;6)]-beta-D-Man-(1-&gt;4)-beta-D-GlcNAc-(1-&gt;4)-beta-D-GlcNAc)-L-asparaginyl-[protein] (N-glucan mannose isomer 9A1,2,3B1,2,3) + 4 H2O = N(4)-(alpha-D-Man-(1-&gt;3)-[alpha-D-Man-(1-&gt;3)-[alpha-D-Man-(1-&gt;6)]-alpha-D-Man-(1-&gt;6)]-beta-D-Man-(1-&gt;4)-beta-D-GlcNAc-(1-&gt;4)-beta-D-GlcNAc)-L-asparaginyl-[protein] (N-glucan mannose isomer 5A1,2) + 4 beta-D-mannose. The catalysed reaction is N(4)-(alpha-D-Man-(1-&gt;2)-alpha-D-Man-(1-&gt;2)-alpha-D-Man-(1-&gt;3)-[alpha-D-Man-(1-&gt;3)-[alpha-D-Man-(1-&gt;2)-alpha-D-Man-(1-&gt;6)]-alpha-D-Man-(1-&gt;6)]-beta-D-Man-(1-&gt;4)-beta-D-GlcNAc-(1-&gt;4)-beta-D-GlcNAc)-L-asparaginyl-[protein] (N-glucan mannose isomer 8A1,2,3B1,3) + 3 H2O = N(4)-(alpha-D-Man-(1-&gt;3)-[alpha-D-Man-(1-&gt;3)-[alpha-D-Man-(1-&gt;6)]-alpha-D-Man-(1-&gt;6)]-beta-D-Man-(1-&gt;4)-beta-D-GlcNAc-(1-&gt;4)-beta-D-GlcNAc)-L-asparaginyl-[protein] (N-glucan mannose isomer 5A1,2) + 3 beta-D-mannose. It participates in protein modification; protein glycosylation. In terms of biological role, involved in the maturation of Asn-linked oligosaccharides. Progressively trims alpha-1,2-linked mannose residues from Man(9)GlcNAc(2) to produce Man(5)GlcNAc(2). This Neosartorya fischeri (strain ATCC 1020 / DSM 3700 / CBS 544.65 / FGSC A1164 / JCM 1740 / NRRL 181 / WB 181) (Aspergillus fischerianus) protein is Probable mannosyl-oligosaccharide alpha-1,2-mannosidase 1B (mns1B).